The primary structure comprises 249 residues: MPEPRRSTIDAGEVERFSALAAEWWNPNGKFRPLHKFNPVRLSYIRDQIAARFGRDPRAARPFEGLRILDIGCGGGLLCEPMARLGAEVVGADASETNIEVAKLHAAEGNVIVDYRATTAEDLADAGETFDVILNMEVVEHVADIDLFVAKCGQMVRPGGIMFVATINRTLKALGLAIIGAEYVLRWLPRGTHQFGKLVRPEELEKALGGASLTIIDRTGVTYNPLADRWARSKDMDVNYMVLAEKGSV.

Positions 41, 72, 93, and 136 each coordinate S-adenosyl-L-methionine.

This sequence belongs to the methyltransferase superfamily. UbiG/COQ3 family.

The enzyme catalyses a 3-demethylubiquinol + S-adenosyl-L-methionine = a ubiquinol + S-adenosyl-L-homocysteine + H(+). The catalysed reaction is a 3-(all-trans-polyprenyl)benzene-1,2-diol + S-adenosyl-L-methionine = a 2-methoxy-6-(all-trans-polyprenyl)phenol + S-adenosyl-L-homocysteine + H(+). The protein operates within cofactor biosynthesis; ubiquinone biosynthesis. Functionally, O-methyltransferase that catalyzes the 2 O-methylation steps in the ubiquinone biosynthetic pathway. The sequence is that of Ubiquinone biosynthesis O-methyltransferase from Mesorhizobium japonicum (strain LMG 29417 / CECT 9101 / MAFF 303099) (Mesorhizobium loti (strain MAFF 303099)).